A 161-amino-acid chain; its full sequence is Putative HTH-type transcriptional regulator MT1325 (161 aa).

An HTH rrf2-type domain is found at 2–132 (RMSAKAEYAV…EETTLADVAG (131 aa)).

The chain is Putative HTH-type transcriptional regulator MT1325 from Mycobacterium tuberculosis (strain CDC 1551 / Oshkosh).